The chain runs to 792 residues: Ribonucleoside-diphosphate reductase large subunit (792 aa).

Residues T200, 215 to 216 (SC), G246, 415 to 419 (NLCAE), and 606 to 610 (PTAGT) contribute to the substrate site. C216 and C431 form a disulfide bridge. N415 functions as the Proton acceptor in the catalytic mechanism. C417 serves as the catalytic Cysteine radical intermediate. Residue E419 is the Proton acceptor of the active site. The disordered stretch occupies residues 758 to 781 (SPPHSGMKQDGAWLPGPKNPEEES).

The protein belongs to the ribonucleoside diphosphate reductase large chain family. As to quaternary structure, heterotetramer composed of a homodimer of the large subunit (R1) and a homodimer of the small subunit (R2). Larger multisubunit protein complex are also active, composed of (R1)n(R2)n.

The enzyme catalyses a 2'-deoxyribonucleoside 5'-diphosphate + [thioredoxin]-disulfide + H2O = a ribonucleoside 5'-diphosphate + [thioredoxin]-dithiol. In terms of biological role, ribonucleoside-diphosphate reductase holoenzyme provides the precursors necessary for viral DNA synthesis. Allows virus growth in non-dividing cells, as well as reactivation from latency in infected hosts. Catalyzes the biosynthesis of deoxyribonucleotides from the corresponding ribonucleotides. The polypeptide is Ribonucleoside-diphosphate reductase large subunit (Human herpesvirus 8 type P (isolate GK18) (HHV-8)).